The following is a 299-amino-acid chain: Foldase protein PrsA (299 aa).

A signal peptide spans 1 to 19; sequence MKKWTIAASLSIGVLALSA. Cys-20 carries the N-palmitoyl cysteine lipid modification. Cys-20 carries S-diacylglycerol cysteine lipidation. Residues 137–227 form the PpiC domain; that stretch reads NTEIQAQHIL…HGTHIIKVND (91 aa).

This sequence belongs to the PrsA family.

The protein resides in the cell membrane. It carries out the reaction [protein]-peptidylproline (omega=180) = [protein]-peptidylproline (omega=0). Plays a major role in protein secretion by helping the post-translocational extracellular folding of several secreted proteins. The protein is Foldase protein PrsA of Oceanobacillus iheyensis (strain DSM 14371 / CIP 107618 / JCM 11309 / KCTC 3954 / HTE831).